The primary structure comprises 242 residues: Anthranilate phosphoribosyltransferase (242 aa).

Residues G79, 82–83 (GD), T87, 89–92 (NVST), 107–115 (KHGNRAVSS), and S119 each bind 5-phospho-alpha-D-ribose 1-diphosphate. G79 contributes to the anthranilate binding site. S91 is a Mg(2+) binding site. An anthranilate-binding site is contributed by N110. Residue R165 participates in anthranilate binding. Mg(2+) is bound by residues D224 and E225.

Belongs to the anthranilate phosphoribosyltransferase family. In terms of assembly, homodimer. Mg(2+) serves as cofactor.

It carries out the reaction N-(5-phospho-beta-D-ribosyl)anthranilate + diphosphate = 5-phospho-alpha-D-ribose 1-diphosphate + anthranilate. It functions in the pathway amino-acid biosynthesis; L-tryptophan biosynthesis; L-tryptophan from chorismate: step 2/5. Its function is as follows. Catalyzes the transfer of the phosphoribosyl group of 5-phosphorylribose-1-pyrophosphate (PRPP) to anthranilate to yield N-(5'-phosphoribosyl)-anthranilate (PRA). In Bacillus caldotenax, this protein is Anthranilate phosphoribosyltransferase (trpD).